Reading from the N-terminus, the 189-residue chain is Large ribosomal subunit protein uL6 (189 aa).

The protein belongs to the universal ribosomal protein uL6 family. Part of the 50S ribosomal subunit.

In terms of biological role, this protein binds to the 23S rRNA, and is important in its secondary structure. It is located near the subunit interface in the base of the L7/L12 stalk, and near the tRNA binding site of the peptidyltransferase center. The chain is Large ribosomal subunit protein uL6 from Phocaeicola vulgatus (strain ATCC 8482 / DSM 1447 / JCM 5826 / CCUG 4940 / NBRC 14291 / NCTC 11154) (Bacteroides vulgatus).